The chain runs to 731 residues: Putative pentatricopeptide repeat-containing protein At1g17630 (731 aa).

15 PPR repeats span residues Ser-88–Val-118, Asp-122–Gly-156, Asp-157–Glu-191, Asn-192–Arg-222, Asn-223–Pro-257, Asp-258–Val-292, Ser-293–Glu-327, Tyr-328–Lys-358, Gly-359–Cys-393, Asn-398–Ala-432, Asn-433–Glu-467, Asn-468–Lys-498, Asp-499–Pro-533, Asp-534–Pro-569, and Gln-570–Glu-600. The type E motif stretch occupies residues Val-605–Lys-680. The interval Lys-681–Leu-711 is type E(+) motif.

The protein belongs to the PPR family. PCMP-E subfamily.

The sequence is that of Putative pentatricopeptide repeat-containing protein At1g17630 (PCMP-E72) from Arabidopsis thaliana (Mouse-ear cress).